The following is a 201-amino-acid chain: Small ribosomal subunit protein uS4 (201 aa).

An S4 RNA-binding domain is found at 91–154; sequence SRLDNVIYRA…QKMEWFEEAQ (64 aa).

The protein belongs to the universal ribosomal protein uS4 family. As to quaternary structure, part of the 30S ribosomal subunit. Contacts protein S5. The interaction surface between S4 and S5 is involved in control of translational fidelity.

One of the primary rRNA binding proteins, it binds directly to 16S rRNA where it nucleates assembly of the body of the 30S subunit. Its function is as follows. With S5 and S12 plays an important role in translational accuracy. This Corynebacterium aurimucosum (strain ATCC 700975 / DSM 44827 / CIP 107346 / CN-1) (Corynebacterium nigricans) protein is Small ribosomal subunit protein uS4.